The chain runs to 341 residues: Holliday junction branch migration complex subunit RuvB (341 aa).

Residues 4–185 are large ATPase domain (RuvB-L); the sequence is TDRLIVPTAV…FGIVARLEFY (182 aa). ATP contacts are provided by residues Leu-24, Arg-25, Gly-66, Lys-69, Thr-70, Thr-71, 132–134, Arg-175, Tyr-185, and Arg-222; that span reads EDF. Thr-70 is a Mg(2+) binding site. The tract at residues 186 to 256 is small ATPAse domain (RuvB-S); the sequence is SAEELGYIVH…VADAALVMLD (71 aa). The tract at residues 259–341 is head domain (RuvB-H); it reads RAGLDVMDRK…ATPASDAELF (83 aa). The DNA site is built by Arg-295, Arg-314, and Arg-319.

The protein belongs to the RuvB family. As to quaternary structure, homohexamer. Forms an RuvA(8)-RuvB(12)-Holliday junction (HJ) complex. HJ DNA is sandwiched between 2 RuvA tetramers; dsDNA enters through RuvA and exits via RuvB. An RuvB hexamer assembles on each DNA strand where it exits the tetramer. Each RuvB hexamer is contacted by two RuvA subunits (via domain III) on 2 adjacent RuvB subunits; this complex drives branch migration. In the full resolvosome a probable DNA-RuvA(4)-RuvB(12)-RuvC(2) complex forms which resolves the HJ.

It localises to the cytoplasm. It carries out the reaction ATP + H2O = ADP + phosphate + H(+). The RuvA-RuvB-RuvC complex processes Holliday junction (HJ) DNA during genetic recombination and DNA repair, while the RuvA-RuvB complex plays an important role in the rescue of blocked DNA replication forks via replication fork reversal (RFR). RuvA specifically binds to HJ cruciform DNA, conferring on it an open structure. The RuvB hexamer acts as an ATP-dependent pump, pulling dsDNA into and through the RuvAB complex. RuvB forms 2 homohexamers on either side of HJ DNA bound by 1 or 2 RuvA tetramers; 4 subunits per hexamer contact DNA at a time. Coordinated motions by a converter formed by DNA-disengaged RuvB subunits stimulates ATP hydrolysis and nucleotide exchange. Immobilization of the converter enables RuvB to convert the ATP-contained energy into a lever motion, pulling 2 nucleotides of DNA out of the RuvA tetramer per ATP hydrolyzed, thus driving DNA branch migration. The RuvB motors rotate together with the DNA substrate, which together with the progressing nucleotide cycle form the mechanistic basis for DNA recombination by continuous HJ branch migration. Branch migration allows RuvC to scan DNA until it finds its consensus sequence, where it cleaves and resolves cruciform DNA. The chain is Holliday junction branch migration complex subunit RuvB from Thiobacillus denitrificans (strain ATCC 25259 / T1).